We begin with the raw amino-acid sequence, 224 residues long: Deoxyribose-phosphate aldolase (224 aa).

The Proton donor/acceptor role is filled by D92. K154 functions as the Schiff-base intermediate with acetaldehyde in the catalytic mechanism. The active-site Proton donor/acceptor is the K183.

Belongs to the DeoC/FbaB aldolase family. DeoC type 1 subfamily.

The protein resides in the cytoplasm. It carries out the reaction 2-deoxy-D-ribose 5-phosphate = D-glyceraldehyde 3-phosphate + acetaldehyde. Its pathway is carbohydrate degradation; 2-deoxy-D-ribose 1-phosphate degradation; D-glyceraldehyde 3-phosphate and acetaldehyde from 2-deoxy-alpha-D-ribose 1-phosphate: step 2/2. Its function is as follows. Catalyzes a reversible aldol reaction between acetaldehyde and D-glyceraldehyde 3-phosphate to generate 2-deoxy-D-ribose 5-phosphate. The protein is Deoxyribose-phosphate aldolase of Mannheimia succiniciproducens (strain KCTC 0769BP / MBEL55E).